The sequence spans 1100 residues: Tyrosine-protein kinase JAK3 (1100 aa).

The interval Met-1–Arg-223 is cytokine/interferon/growth hormone receptors. Ser-17 carries the phosphoserine modification. Residues Gly-24–Arg-353 enclose the FERM domain. One can recognise an SH2; atypical domain in the interval Leu-372–Cys-472. The Protein kinase 1 domain maps to Leu-517–Ile-777. Phosphotyrosine; by autocatalysis is present on Tyr-781. Residues Leu-818–Leu-1091 form the Protein kinase 2 domain. ATP contacts are provided by residues Leu-824 to Val-832 and Lys-851. A phosphotyrosine mark is found at Tyr-900 and Tyr-935. Catalysis depends on Asp-945, which acts as the Proton acceptor. Residues Tyr-976 and Tyr-977 each carry the phosphotyrosine; by autocatalysis modification.

The protein belongs to the protein kinase superfamily. Tyr protein kinase family. JAK subfamily. Interacts with STAM2 and MYO18A. Interacts with SHB. Interacts with CD69. Autophosphorylated, leading to regulate its activity. IL2 promotes phosphorylation on tyrosine residues, including autophosphorylation on Tyr-781. Dephosphorylation of Tyr-976 and Tyr-977 by PTPN2 negatively regulates cytokine-mediated signaling. In contrast with the ubiquitous expression of the other JAKs, JAK3 is predominantly expressed in hematopoietic tissues.

The protein resides in the endomembrane system. It is found in the cytoplasm. It carries out the reaction L-tyrosyl-[protein] + ATP = O-phospho-L-tyrosyl-[protein] + ADP + H(+). In terms of biological role, non-receptor tyrosine kinase involved in various processes such as cell growth, development, or differentiation. Mediates essential signaling events in both innate and adaptive immunity and plays a crucial role in hematopoiesis during T-cells development. In the cytoplasm, plays a pivotal role in signal transduction via its association with type I receptors sharing the common subunit gamma such as IL2R, IL4R, IL7R, IL9R, IL15R and IL21R. Following ligand binding to cell surface receptors, phosphorylates specific tyrosine residues on the cytoplasmic tails of the receptor, creating docking sites for STATs proteins. Subsequently, phosphorylates the STATs proteins once they are recruited to the receptor. Phosphorylated STATs then form homodimer or heterodimers and translocate to the nucleus to activate gene transcription. For example, upon IL2R activation by IL2, JAK1 and JAK3 molecules bind to IL2R beta (IL2RB) and gamma chain (IL2RG) subunits inducing the tyrosine phosphorylation of both receptor subunits on their cytoplasmic domain. Then, STAT5A and STAT5B are recruited, phosphorylated and activated by JAK1 and JAK3. Once activated, dimerized STAT5 translocates to the nucleus and promotes the transcription of specific target genes in a cytokine-specific fashion. The protein is Tyrosine-protein kinase JAK3 of Rattus norvegicus (Rat).